Here is a 224-residue protein sequence, read N- to C-terminus: UPF0758 protein Avin_02940 (224 aa).

Residues 102 to 224 (ALESPQAVRD…PLSMAEQGWL (123 aa)) enclose the MPN domain. Zn(2+) is bound by residues histidine 173, histidine 175, and aspartate 186. The short motif at 173-186 (HNHPSGIAEPSQAD) is the JAMM motif element.

The protein belongs to the UPF0758 family.

The protein is UPF0758 protein Avin_02940 of Azotobacter vinelandii (strain DJ / ATCC BAA-1303).